The following is a 434-amino-acid chain: Ribosomal protein uS12 methylthiotransferase RimO (434 aa).

In terms of domain architecture, MTTase N-terminal spans 4-122 (NRVDVITLGC…LISHLGKSYY (119 aa)). Residues Cys-13, Cys-51, Cys-85, Cys-146, Cys-150, and Cys-153 each contribute to the [4Fe-4S] cluster site. The Radical SAM core domain occupies 132–363 (TTPRHYAYLK…MAVQERISAA (232 aa)). Residues 366–434 (EAKIGSRLRV…PFDLYARIVD (69 aa)) form the TRAM domain.

The protein belongs to the methylthiotransferase family. RimO subfamily. Requires [4Fe-4S] cluster as cofactor.

Its subcellular location is the cytoplasm. The catalysed reaction is L-aspartate(89)-[ribosomal protein uS12]-hydrogen + (sulfur carrier)-SH + AH2 + 2 S-adenosyl-L-methionine = 3-methylsulfanyl-L-aspartate(89)-[ribosomal protein uS12]-hydrogen + (sulfur carrier)-H + 5'-deoxyadenosine + L-methionine + A + S-adenosyl-L-homocysteine + 2 H(+). Functionally, catalyzes the methylthiolation of an aspartic acid residue of ribosomal protein uS12. This Porphyromonas gingivalis (strain ATCC 33277 / DSM 20709 / CIP 103683 / JCM 12257 / NCTC 11834 / 2561) protein is Ribosomal protein uS12 methylthiotransferase RimO.